Consider the following 840-residue polypeptide: Heat shock 70 kDa protein 4 (840 aa).

An N6-acetyllysine modification is found at Lys-53. Position 76 is a phosphoserine (Ser-76). Phosphotyrosine is present on residues Tyr-89 and Tyr-336. Phosphoserine occurs at positions 393 and 415. Lys-430 is modified (N6-acetyllysine). The disordered stretch occupies residues 500–575 (VHKSEENEEP…QAKKAKVKTS (76 aa)). A compositionally biased stretch (basic and acidic residues) spans 514–533 (QNAKEEEKMQVDQEEPHVEE). Phosphothreonine is present on Thr-538. Residues Ser-546 and Ser-647 each carry the phosphoserine modification. Tyr-660 is subject to Phosphotyrosine. At Lys-679 the chain carries N6-acetyllysine. At Ser-756 the chain carries Phosphoserine. Lys-773 carries the post-translational modification N6-methyllysine. Positions 779–840 (CSPIISKPKP…DKKLPEMDID (62 aa)) are disordered. Basic and acidic residues-rich tracts occupy residues 788–799 (PKVEPPKEEQKN) and 829–840 (DSDKKLPEMDID).

This sequence belongs to the heat shock protein 70 family. As to quaternary structure, interacts with TJP1/ZO-1.

It localises to the cytoplasm. The chain is Heat shock 70 kDa protein 4 (HSPA4) from Homo sapiens (Human).